Consider the following 434-residue polypeptide: ATP-dependent protease ATPase subunit HslU (434 aa).

ATP-binding positions include Ile-18, 60–65 (GVGKTE), Asp-247, Glu-312, and Arg-384.

It belongs to the ClpX chaperone family. HslU subfamily. As to quaternary structure, a double ring-shaped homohexamer of HslV is capped on each side by a ring-shaped HslU homohexamer. The assembly of the HslU/HslV complex is dependent on binding of ATP.

The protein resides in the cytoplasm. Functionally, ATPase subunit of a proteasome-like degradation complex; this subunit has chaperone activity. The binding of ATP and its subsequent hydrolysis by HslU are essential for unfolding of protein substrates subsequently hydrolyzed by HslV. HslU recognizes the N-terminal part of its protein substrates and unfolds these before they are guided to HslV for hydrolysis. This is ATP-dependent protease ATPase subunit HslU from Brucella melitensis biotype 2 (strain ATCC 23457).